Here is a 125-residue protein sequence, read N- to C-terminus: Large ribosomal subunit protein bL19 (125 aa).

Belongs to the bacterial ribosomal protein bL19 family.

This protein is located at the 30S-50S ribosomal subunit interface and may play a role in the structure and function of the aminoacyl-tRNA binding site. In Ehrlichia canis (strain Jake), this protein is Large ribosomal subunit protein bL19.